Reading from the N-terminus, the 157-residue chain is MGFPKVERLLINYKTLDEFKKFKGCGAQELSMLEELQANIIENNSESPFYGIYYGGSLIARMSLYMKRNGGEPFEITGTYLELYKLEVLPTFQKQGFGEMLVNYAKGLQFPIKTIARIHSAGFWDKLNFQPVSVPDGDFYVWHPETNLNTVTNEESA.

The 138-residue stretch at 9–146 (LLINYKTLDE…GDFYVWHPET (138 aa)) folds into the N-acetyltransferase domain.

This is an uncharacterized protein from Bacillus cereus (strain ATCC 10987 / NRS 248).